The following is a 195-amino-acid chain: Imidazoleglycerol-phosphate dehydratase (195 aa).

The protein belongs to the imidazoleglycerol-phosphate dehydratase family.

It localises to the cytoplasm. It catalyses the reaction D-erythro-1-(imidazol-4-yl)glycerol 3-phosphate = 3-(imidazol-4-yl)-2-oxopropyl phosphate + H2O. It participates in amino-acid biosynthesis; L-histidine biosynthesis; L-histidine from 5-phospho-alpha-D-ribose 1-diphosphate: step 6/9. This is Imidazoleglycerol-phosphate dehydratase from Thermotoga neapolitana (strain ATCC 49049 / DSM 4359 / NBRC 107923 / NS-E).